Reading from the N-terminus, the 616-residue chain is Electron transfer flavoprotein-ubiquinone oxidoreductase, mitochondrial (616 aa).

A mitochondrion-targeting transit peptide spans 1 to 32 (MLVRLTKLSCPAYHWFHALKIKKCLPLCAPRC). 70-84 (VVIVGAGPAGLSAAI) is a binding site for FAD. Lys-95 carries the N6-acetyllysine modification. An intramembrane segment occupies 108-129 (IGAHTLSGACLDPAAFKELFPD). 2 positions are modified to N6-acetyllysine: Lys-131 and Lys-222. The a ubiquinone site is built by Gly-304 and Gly-305. 2 positions are modified to N6-acetyllysine: Lys-356 and Lys-415. An intramembrane segment occupies 427 to 446 (TGLHVTEYEDNLKQSWVWKE). The residue at position 550 (Ser-550) is a Phosphoserine. Cys-560, Cys-585, Cys-588, and Cys-591 together coordinate [4Fe-4S] cluster. Residues 576–605 (FRLQINAQNCVHCKTCDIKDPSQNINWVVP) enclose the 4Fe-4S ferredoxin-type domain.

This sequence belongs to the ETF-QO/FixC family. Monomer. [4Fe-4S] cluster serves as cofactor. FAD is required as a cofactor. In terms of processing, acetylation of Lys-95 and Lys-222 is observed in liver mitochondria from fasted mice but not from fed mice.

Its subcellular location is the mitochondrion inner membrane. It catalyses the reaction a ubiquinone + reduced [electron-transfer flavoprotein] = a ubiquinol + oxidized [electron-transfer flavoprotein] + H(+). Its function is as follows. Accepts electrons from ETF and reduces ubiquinone. The protein is Electron transfer flavoprotein-ubiquinone oxidoreductase, mitochondrial (Etfdh) of Mus musculus (Mouse).